The primary structure comprises 522 residues: Bifunctional purine biosynthesis protein PurH (522 aa).

Positions 1-143 (MIRRALISVS…KNHARVAVVV (143 aa)) constitute an MGS-like domain.

This sequence belongs to the PurH family.

It catalyses the reaction (6R)-10-formyltetrahydrofolate + 5-amino-1-(5-phospho-beta-D-ribosyl)imidazole-4-carboxamide = 5-formamido-1-(5-phospho-D-ribosyl)imidazole-4-carboxamide + (6S)-5,6,7,8-tetrahydrofolate. The catalysed reaction is IMP + H2O = 5-formamido-1-(5-phospho-D-ribosyl)imidazole-4-carboxamide. The protein operates within purine metabolism; IMP biosynthesis via de novo pathway; 5-formamido-1-(5-phospho-D-ribosyl)imidazole-4-carboxamide from 5-amino-1-(5-phospho-D-ribosyl)imidazole-4-carboxamide (10-formyl THF route): step 1/1. It functions in the pathway purine metabolism; IMP biosynthesis via de novo pathway; IMP from 5-formamido-1-(5-phospho-D-ribosyl)imidazole-4-carboxamide: step 1/1. The protein is Bifunctional purine biosynthesis protein PurH of Sorangium cellulosum (strain So ce56) (Polyangium cellulosum (strain So ce56)).